We begin with the raw amino-acid sequence, 912 residues long: MRTLISHRQCVTSPFLISAASPPFPGRCFKLSSFTPPRHRRFSSLSIRNISHESADQTSSSRPRTLYPGGYKRPELAVPGLLLRLDADEVMSGNREETLDLVDRALAKSVQIVVIDGGATAGKLYEAACLLKSLVKGRAYLLIAERVDIASAVGASGVALSDEGLPAIVARNTLMGSNPDSVLLPLVARIVKDVDSALIASSSEGADFLILGSGEEDTQVADSLLKSVKIPIYVTCRGNEEAKEELQLLKSGVSGFVISLKDLRSSRDVALRQSLDGAYVVNNHETQNMNELPEKKNSAGFIKLEDKQKLIVEMEKSVLRETIEIIHKAAPLMEEVSLLIDAVSRIDEPFLMVIVGEFNSGKSTVINALLGKRYLKEGVVPTTNEITFLCYSDLESEEQQRCQTHPDGQYVCYLPAPILKDINIVDTPGTNVILQRQQRLTEEFVPRADLLVFVLSADRPLTESEVAFLRYTQQWKKKFVFILNKSDIYRDARELEEAISFVKENTRKLLNTENVILYPVSARSALEAKLSTASLVGRDDLEIADPGSNWRVQSFNELEKFLYSFLDSSTATGMERIRLKLETPMAIAERLLSSVEALVRQDCLAAREDLASADKIISRTKEYALKMEYESISWRRQALSLIDNARLQVVDLIGTTLRLSSLDLAISYVFKGEKSASVAATSKVQGEILAPALTNAKELLGKYAEWLQSNTAREGSLSLKSFENKWPTYVNSKTQLGIDTYDLLQKTDKVSLKTIQNLSAGTTSKRLEQDIREVFFVTVGGLGAAGLSASLLTSVLPTTLEDLLALGLCSAGGYVAIANFPYRRQAIIGKVNKVADALAQQLEDAMQKDLSDATSNLVNFVNIVAKPYREEAQLRLDRLLGIQKELSDIRSKLQLLQVDIDNLHVSRDEMRL.

A chloroplast-targeting transit peptide spans 1–54 (MRTLISHRQCVTSPFLISAASPPFPGRCFKLSSFTPPRHRRFSSLSIRNISHES). The tract at residues 51–71 (SHESADQTSSSRPRTLYPGGY) is disordered. Residues 55–773 (ADQTSSSRPR…SKRLEQDIRE (719 aa)) are Stromal-facing. Residues 359-364 (NSGKST) and S521 each bind GTP. Residues 774 to 794 (VFFVTVGGLGAAGLSASLLTS) form a helical membrane-spanning segment. Topologically, residues 795-801 (VLPTTLE) are chloroplast intermembrane. Residues 802–822 (DLLALGLCSAGGYVAIANFPY) form a helical membrane-spanning segment. At 823-912 (RRQAIIGKVN…LHVSRDEMRL (90 aa)) the chain is on the stromal side. Residues 877–904 (DRLLGIQKELSDIRSKLQLLQVDIDNLH) are a coiled coil.

Belongs to the TRAFAC class dynamin-like GTPase superfamily. Dynamin/Fzo/YdjA family. Mitofusin subfamily.

It is found in the plastid. The protein localises to the chloroplast inner membrane. The protein resides in the chloroplast thylakoid membrane. Functionally, probable membrane-remodeling GTPase that plays a unique role in the in the determination of thylakoid and chloroplast morphology and regulates organization of the thylakoid network. Not involved in the determination of mitochondrial morphology or ultrastructure. The polypeptide is Probable transmembrane GTPase FZO-like, chloroplastic (Arabidopsis thaliana (Mouse-ear cress)).